Here is a 244-residue protein sequence, read N- to C-terminus: uncharacterized protein (244 aa).

Transmembrane regions (helical) follow at residues 21 to 41 (FPYS…YGIY), 44 to 64 (ALGF…AGSV), 66 to 86 (FIAA…LITL), 139 to 159 (WYMF…AAMG), 165 to 185 (VLPF…LVIF), and 199 to 219 (LLGL…YFLI).

It belongs to the AzlC family.

The protein resides in the cell membrane. This is an uncharacterized protein from Haemophilus influenzae (strain ATCC 51907 / DSM 11121 / KW20 / Rd).